A 396-amino-acid chain; its full sequence is S-adenosylmethionine synthase (396 aa).

Residue His-16 participates in ATP binding. Residue Asp-18 participates in Mg(2+) binding. Glu-44 lines the K(+) pocket. Residues Glu-57 and Gln-100 each contribute to the L-methionine site. The interval 100–110 is flexible loop; the sequence is QSPDIAQGVDR. ATP contacts are provided by residues 167 to 169, 233 to 234, Asp-242, 248 to 249, Ala-265, and Lys-269; these read DAK, RF, and RK. Residue Asp-242 participates in L-methionine binding. Lys-273 is a binding site for L-methionine.

Belongs to the AdoMet synthase family. As to quaternary structure, homotetramer; dimer of dimers. The cofactor is Mg(2+). K(+) serves as cofactor.

It is found in the cytoplasm. The catalysed reaction is L-methionine + ATP + H2O = S-adenosyl-L-methionine + phosphate + diphosphate. The protein operates within amino-acid biosynthesis; S-adenosyl-L-methionine biosynthesis; S-adenosyl-L-methionine from L-methionine: step 1/1. In terms of biological role, catalyzes the formation of S-adenosylmethionine (AdoMet) from methionine and ATP. The overall synthetic reaction is composed of two sequential steps, AdoMet formation and the subsequent tripolyphosphate hydrolysis which occurs prior to release of AdoMet from the enzyme. This chain is S-adenosylmethionine synthase, found in Paraburkholderia xenovorans (strain LB400).